A 270-amino-acid polypeptide reads, in one-letter code: NAD kinase (270 aa).

The active-site Proton acceptor is the D45. Residues 45–46 (DG), 121–122 (NE), R147, D149, 160–165 (TAYNKS), and A184 each bind NAD(+).

The protein belongs to the NAD kinase family. It depends on a divalent metal cation as a cofactor.

The protein localises to the cytoplasm. The catalysed reaction is NAD(+) + ATP = ADP + NADP(+) + H(+). Functionally, involved in the regulation of the intracellular balance of NAD and NADP, and is a key enzyme in the biosynthesis of NADP. Catalyzes specifically the phosphorylation on 2'-hydroxyl of the adenosine moiety of NAD to yield NADP. This is NAD kinase from Limosilactobacillus reuteri subsp. reuteri (strain JCM 1112) (Lactobacillus reuteri).